A 393-amino-acid chain; its full sequence is Sulfate adenylyltransferase (393 aa).

This sequence belongs to the sulfate adenylyltransferase family.

The catalysed reaction is sulfate + ATP + H(+) = adenosine 5'-phosphosulfate + diphosphate. Its pathway is sulfur metabolism; hydrogen sulfide biosynthesis; sulfite from sulfate: step 1/3. The polypeptide is Sulfate adenylyltransferase (Symbiobacterium thermophilum (strain DSM 24528 / JCM 14929 / IAM 14863 / T)).